A 502-amino-acid chain; its full sequence is ATP synthase subunit alpha (502 aa).

A disordered region spans residues 115–137; the sequence is VDGLGPVETTETRPIESPAPGVM. Residue 169-176 coordinates ATP; that stretch reads GDRQTGKT.

This sequence belongs to the ATPase alpha/beta chains family. In terms of assembly, F-type ATPases have 2 components, CF(1) - the catalytic core - and CF(0) - the membrane proton channel. CF(1) has five subunits: alpha(3), beta(3), gamma(1), delta(1), epsilon(1). CF(0) has three main subunits: a(1), b(2) and c(9-12). The alpha and beta chains form an alternating ring which encloses part of the gamma chain. CF(1) is attached to CF(0) by a central stalk formed by the gamma and epsilon chains, while a peripheral stalk is formed by the delta and b chains.

It is found in the cell membrane. It catalyses the reaction ATP + H2O + 4 H(+)(in) = ADP + phosphate + 5 H(+)(out). Functionally, produces ATP from ADP in the presence of a proton gradient across the membrane. The alpha chain is a regulatory subunit. The protein is ATP synthase subunit alpha of Geobacillus stearothermophilus (Bacillus stearothermophilus).